Consider the following 237-residue polypeptide: E3 ubiquitin-protein ligase RNF166 (237 aa).

An RING-type zinc finger spans residues 33–73 (CPICLEVYHRPVAIGSCGHTFCGECLQPCLQVPSPLCPLCR). The Zn(2+) site is built by Cys-98, Cys-101, His-113, and Cys-117. The segment at 98 to 117 (CRGCNKKVTLAKMRVHISSC) adopts a C2HC RNF-type zinc-finger fold. The 17-residue stretch at 221–237 (DEEAAFQAALALSLSEN) folds into the UIM domain.

It is found in the cytoplasm. The catalysed reaction is S-ubiquitinyl-[E2 ubiquitin-conjugating enzyme]-L-cysteine + [acceptor protein]-L-lysine = [E2 ubiquitin-conjugating enzyme]-L-cysteine + N(6)-ubiquitinyl-[acceptor protein]-L-lysine.. Its pathway is protein modification; protein ubiquitination. In terms of biological role, E3 ubiquitin-protein ligase that promotes the ubiquitination of different substrates. In turn, participates in different biological processes including interferon production or autophagy. Plays a role in the activation of RNA virus-induced interferon-beta production by promoting the ubiquitination of TRAF3 and TRAF6. Also plays a role in the early recruitment of autophagy adapters to bacteria. Mediates 'Lys-29' and 'Lys-33'-linked ubiquitination of SQSTM1 leading to xenophagic targeting of bacteria and inhibition of their replication. The chain is E3 ubiquitin-protein ligase RNF166 (RNF166) from Homo sapiens (Human).